Here is a 325-residue protein sequence, read N- to C-terminus: tRNA dimethylallyltransferase (325 aa).

25–32 contacts ATP; it reads GNTGSGKS. 27–32 is a substrate binding site; the sequence is TGSGKS. An interaction with substrate tRNA region spans residues 50–53; sequence DSRQ.

The protein belongs to the IPP transferase family. As to quaternary structure, monomer. Requires Mg(2+) as cofactor.

It catalyses the reaction adenosine(37) in tRNA + dimethylallyl diphosphate = N(6)-dimethylallyladenosine(37) in tRNA + diphosphate. Catalyzes the transfer of a dimethylallyl group onto the adenine at position 37 in tRNAs that read codons beginning with uridine, leading to the formation of N6-(dimethylallyl)adenosine (i(6)A). In Dehalococcoides mccartyi (strain ATCC BAA-2266 / KCTC 15142 / 195) (Dehalococcoides ethenogenes (strain 195)), this protein is tRNA dimethylallyltransferase.